The sequence spans 77 residues: Putative defensin-like protein 118 (77 aa).

An N-terminal signal peptide occupies residues 1–25 (MSKSTILAIFMIVLVLGKVTKETQG). Intrachain disulfides connect Cys-29–Cys-75, Cys-39–Cys-58, Cys-44–Cys-69, and Cys-48–Cys-71.

The protein belongs to the DEFL family.

It is found in the secreted. This is Putative defensin-like protein 118 (LCR52) from Arabidopsis thaliana (Mouse-ear cress).